We begin with the raw amino-acid sequence, 335 residues long: tRNA-dihydrouridine(20/20a) synthase (335 aa).

Residues 20–22 and Gln-72 contribute to the FMN site; that span reads PML. Cys-102 acts as the Proton donor in catalysis. FMN is bound by residues Lys-141, His-173, 213-215, and 235-236; these read NGG and GR.

This sequence belongs to the Dus family. DusA subfamily. It depends on FMN as a cofactor.

The catalysed reaction is 5,6-dihydrouridine(20) in tRNA + NADP(+) = uridine(20) in tRNA + NADPH + H(+). It catalyses the reaction 5,6-dihydrouridine(20) in tRNA + NAD(+) = uridine(20) in tRNA + NADH + H(+). It carries out the reaction 5,6-dihydrouridine(20a) in tRNA + NADP(+) = uridine(20a) in tRNA + NADPH + H(+). The enzyme catalyses 5,6-dihydrouridine(20a) in tRNA + NAD(+) = uridine(20a) in tRNA + NADH + H(+). Functionally, catalyzes the synthesis of 5,6-dihydrouridine (D), a modified base found in the D-loop of most tRNAs, via the reduction of the C5-C6 double bond in target uridines. Specifically modifies U20 and U20a in tRNAs. The protein is tRNA-dihydrouridine(20/20a) synthase of Shewanella oneidensis (strain ATCC 700550 / JCM 31522 / CIP 106686 / LMG 19005 / NCIMB 14063 / MR-1).